Here is a 357-residue protein sequence, read N- to C-terminus: Iron deficiency-induced protein A (357 aa).

The tat-type signal signal peptide spans Met1 to Ala36. The Fe cation site is built by His48, Tyr49, Tyr182, Tyr238, and Tyr239.

Belongs to the bacterial solute-binding protein 1 family. In terms of processing, predicted to be exported by the Tat system. The position of the signal peptide cleavage has not been experimentally proven.

It localises to the cellular thylakoid membrane. Functionally, plays an important role in protecting the acceptor side of photosystem II (PSII) against oxidative damage, especially under iron-limiting growth conditions. Its function is as follows. May also be part of a periplasmic ABC transporter complex involved in iron import. This is Iron deficiency-induced protein A (idiA) from Synechococcus elongatus (strain ATCC 33912 / PCC 7942 / FACHB-805) (Anacystis nidulans R2).